A 561-amino-acid polypeptide reads, in one-letter code: Arginine--tRNA ligase (561 aa).

Positions 128 to 138 match the 'HIGH' region motif; the sequence is ANPTGPLHVGH.

The protein belongs to the class-I aminoacyl-tRNA synthetase family. In terms of assembly, monomer.

It is found in the cytoplasm. It catalyses the reaction tRNA(Arg) + L-arginine + ATP = L-arginyl-tRNA(Arg) + AMP + diphosphate. This Methylibium petroleiphilum (strain ATCC BAA-1232 / LMG 22953 / PM1) protein is Arginine--tRNA ligase.